A 159-amino-acid polypeptide reads, in one-letter code: Neurotrophin-3 (159 aa).

A signal peptide spans 1–3 (IQS). Residues 4-115 (TSMDQGILTE…VQNRTSRRKR (112 aa)) constitute a propeptide that is removed on maturation. The segment at 91-129 (APLEPPPLYLTEEPLVQNRTSRRKREGKRHRGEYSVCDS) is disordered. Asn-108 carries an N-linked (GlcNAc...) asparagine glycan. Residues 110-121 (TSRRKREGKRHR) are compositionally biased toward basic residues.

It belongs to the NGF-beta family.

The protein localises to the secreted. Functionally, seems to promote the survival of visceral and proprioceptive sensory neurons. This chain is Neurotrophin-3 (NTF3), found in Candoia carinata (Papuan tree boa).